The chain runs to 406 residues: NADH-quinone oxidoreductase subunit D (406 aa).

This sequence belongs to the complex I 49 kDa subunit family. As to quaternary structure, NDH-1 is composed of 14 different subunits. Subunits NuoB, C, D, E, F, and G constitute the peripheral sector of the complex.

It localises to the cell inner membrane. It carries out the reaction a quinone + NADH + 5 H(+)(in) = a quinol + NAD(+) + 4 H(+)(out). NDH-1 shuttles electrons from NADH, via FMN and iron-sulfur (Fe-S) centers, to quinones in the respiratory chain. The immediate electron acceptor for the enzyme in this species is believed to be ubiquinone. Couples the redox reaction to proton translocation (for every two electrons transferred, four hydrogen ions are translocated across the cytoplasmic membrane), and thus conserves the redox energy in a proton gradient. The polypeptide is NADH-quinone oxidoreductase subunit D (Leptospira biflexa serovar Patoc (strain Patoc 1 / Ames)).